Here is a 1073-residue protein sequence, read N- to C-terminus: Carbamoyl phosphate synthase large chain (1073 aa).

The segment at 1-399 (MPKREDIKKV…SLLKAFKSLD (399 aa)) is carboxyphosphate synthetic domain. ATP contacts are provided by R129, R169, G175, G176, E208, V210, E215, G241, V242, H243, Q284, and E296. The region spanning 133–325 (KETMLSIGEK…IARVTAKIAI (193 aa)) is the ATP-grasp 1 domain. Residues Q284, E296, and N298 each contribute to the Mg(2+) site. Q284, E296, and N298 together coordinate Mn(2+). An oligomerization domain region spans residues 400 to 540 (IDNQLGIKRW…YSTYEDTCET (141 aa)). The interval 541 to 931 (NSTDKKKILI…YKAELAADNL (391 aa)) is carbamoyl phosphate synthetic domain. Residues 672-863 (YLLMQELGIP…LAKIAAKVIA (192 aa)) form the ATP-grasp 2 domain. 10 residues coordinate ATP: R708, D747, L749, E754, G779, V780, H781, S782, Q822, and E834. Positions 822, 834, and 836 each coordinate Mg(2+). Residues Q822, E834, and N836 each contribute to the Mn(2+) site. The MGS-like domain maps to 930–1071 (NLLPLTGKVF…NEYHKEMEQK (142 aa)). The allosteric domain stretch occupies residues 932–1073 (LPLTGKVFLS…YHKEMEQKEE (142 aa)).

Belongs to the CarB family. Composed of two chains; the small (or glutamine) chain promotes the hydrolysis of glutamine to ammonia, which is used by the large (or ammonia) chain to synthesize carbamoyl phosphate. Tetramer of heterodimers (alpha,beta)4. The cofactor is Mg(2+). Mn(2+) serves as cofactor.

It catalyses the reaction hydrogencarbonate + L-glutamine + 2 ATP + H2O = carbamoyl phosphate + L-glutamate + 2 ADP + phosphate + 2 H(+). The catalysed reaction is hydrogencarbonate + NH4(+) + 2 ATP = carbamoyl phosphate + 2 ADP + phosphate + 2 H(+). It functions in the pathway amino-acid biosynthesis; L-arginine biosynthesis; carbamoyl phosphate from bicarbonate: step 1/1. Its pathway is pyrimidine metabolism; UMP biosynthesis via de novo pathway; (S)-dihydroorotate from bicarbonate: step 1/3. In terms of biological role, large subunit of the glutamine-dependent carbamoyl phosphate synthetase (CPSase). CPSase catalyzes the formation of carbamoyl phosphate from the ammonia moiety of glutamine, carbonate, and phosphate donated by ATP, constituting the first step of 2 biosynthetic pathways, one leading to arginine and/or urea and the other to pyrimidine nucleotides. The large subunit (synthetase) binds the substrates ammonia (free or transferred from glutamine from the small subunit), hydrogencarbonate and ATP and carries out an ATP-coupled ligase reaction, activating hydrogencarbonate by forming carboxy phosphate which reacts with ammonia to form carbamoyl phosphate. The sequence is that of Carbamoyl phosphate synthase large chain from Methanosarcina mazei (strain ATCC BAA-159 / DSM 3647 / Goe1 / Go1 / JCM 11833 / OCM 88) (Methanosarcina frisia).